Reading from the N-terminus, the 307-residue chain is Porphobilinogen deaminase (307 aa).

Position 239 is an S-(dipyrrolylmethanemethyl)cysteine (Cys-239).

Belongs to the HMBS family. Monomer. It depends on dipyrromethane as a cofactor.

It catalyses the reaction 4 porphobilinogen + H2O = hydroxymethylbilane + 4 NH4(+). It functions in the pathway porphyrin-containing compound metabolism; protoporphyrin-IX biosynthesis; coproporphyrinogen-III from 5-aminolevulinate: step 2/4. Tetrapolymerization of the monopyrrole PBG into the hydroxymethylbilane pre-uroporphyrinogen in several discrete steps. This is Porphobilinogen deaminase (hemC) from Campylobacter jejuni subsp. jejuni serotype O:2 (strain ATCC 700819 / NCTC 11168).